The chain runs to 196 residues: Proteasome subunit beta 1 (196 aa).

The propeptide at 1–6 (MEELPA) is removed in mature form; by autocatalysis. Catalysis depends on Thr-7, which acts as the Nucleophile.

It belongs to the peptidase T1B family. In terms of assembly, the 20S proteasome core is composed of 14 alpha and 14 beta subunits that assemble into four stacked heptameric rings, resulting in a barrel-shaped structure. The two inner rings, each composed of seven catalytic beta subunits, are sandwiched by two outer rings, each composed of seven alpha subunits. The catalytic chamber with the active sites is on the inside of the barrel. Has a gated structure, the ends of the cylinder being occluded by the N-termini of the alpha-subunits. Is capped at one or both ends by the proteasome regulatory ATPase, PAN.

Its subcellular location is the cytoplasm. It catalyses the reaction Cleavage of peptide bonds with very broad specificity.. The formation of the proteasomal ATPase PAN-20S proteasome complex, via the docking of the C-termini of PAN into the intersubunit pockets in the alpha-rings, triggers opening of the gate for substrate entry. Interconversion between the open-gate and close-gate conformations leads to a dynamic regulation of the 20S proteasome proteolysis activity. Component of the proteasome core, a large protease complex with broad specificity involved in protein degradation. The protein is Proteasome subunit beta 1 of Saccharolobus islandicus (strain Y.N.15.51 / Yellowstone #2) (Sulfolobus islandicus).